Consider the following 930-residue polypeptide: Isoleucine--tRNA ligase (930 aa).

Residues P57–H67 carry the 'HIGH' region motif. L-isoleucyl-5'-AMP is bound at residue E554. Residues K595–S599 carry the 'KMSKS' region motif. K598 is a binding site for ATP.

Belongs to the class-I aminoacyl-tRNA synthetase family. IleS type 1 subfamily. As to quaternary structure, monomer.

The protein localises to the cytoplasm. It carries out the reaction tRNA(Ile) + L-isoleucine + ATP = L-isoleucyl-tRNA(Ile) + AMP + diphosphate. Its function is as follows. Catalyzes the attachment of isoleucine to tRNA(Ile). As IleRS can inadvertently accommodate and process structurally similar amino acids such as valine, to avoid such errors it has two additional distinct tRNA(Ile)-dependent editing activities. One activity is designated as 'pretransfer' editing and involves the hydrolysis of activated Val-AMP. The other activity is designated 'posttransfer' editing and involves deacylation of mischarged Val-tRNA(Ile). The chain is Isoleucine--tRNA ligase from Streptococcus agalactiae serotype Ia (strain ATCC 27591 / A909 / CDC SS700).